Here is a 286-residue protein sequence, read N- to C-terminus: Polyamine aminopropyltransferase (286 aa).

A PABS domain is found at 5 to 238 (TMWHETLHDQ…GIMTFAWATD (234 aa)). Q33 is an S-methyl-5'-thioadenosine binding site. H64 and D88 together coordinate spermidine. S-methyl-5'-thioadenosine contacts are provided by residues E108 and 140 to 141 (DG). Residue D158 is the Proton acceptor of the active site. Residue 158-161 (DCTD) coordinates spermidine. Position 165 (P165) interacts with S-methyl-5'-thioadenosine.

It belongs to the spermidine/spermine synthase family. Homodimer or homotetramer.

The protein resides in the cytoplasm. It catalyses the reaction S-adenosyl 3-(methylsulfanyl)propylamine + putrescine = S-methyl-5'-thioadenosine + spermidine + H(+). It functions in the pathway amine and polyamine biosynthesis; spermidine biosynthesis; spermidine from putrescine: step 1/1. Its function is as follows. Catalyzes the irreversible transfer of a propylamine group from the amino donor S-adenosylmethioninamine (decarboxy-AdoMet) to putrescine (1,4-diaminobutane) to yield spermidine. The protein is Polyamine aminopropyltransferase of Salmonella typhi.